The sequence spans 595 residues: APOBEC1 complementation factor (595 aa).

3 RRM domains span residues 56–134 (CEIF…ASVD), 136–218 (CRLF…WAEP), and 231–303 (KILY…LAKP). The segment at 360-409 (HFPATKGHLSNRALIRTPSVREIYMNVPVGAAGVRGLGGRGYLAYTGLGR) is required for nuclear localization.

As to quaternary structure, part of the apolipoprotein B mRNA editing complex with APOBEC1. Interacts with TNPO2; TNPO2 may be responsible for transport of A1CF into the nucleus. Interacts with SYNCRIP. Interacts with CELF2/CUGBP2. Interacts with RBM47. As to expression, expressed primarily in liver, small intestine and kidney.

The protein resides in the nucleus. The protein localises to the endoplasmic reticulum. Its subcellular location is the cytoplasm. Essential component of the apolipoprotein B mRNA editing enzyme complex which is responsible for the postranscriptional editing of a CAA codon for Gln to a UAA codon for stop in APOB mRNA. Binds to APOB mRNA and is probably responsible for docking the catalytic subunit, APOBEC1, to the mRNA to allow it to deaminate its target cytosine. The complex also seems to protect the edited APOB mRNA from nonsense-mediated decay. The sequence is that of APOBEC1 complementation factor (A1cf) from Mus musculus (Mouse).